The sequence spans 458 residues: Morphogenetic regulator of filamentous growth protein 1 (458 aa).

Positions 401 to 458 (KKDSGSEPLHAKRRRNSGISPRTTTLGPNGNSNTSNEELPTSDVNDINKDMTKKKMKF) are disordered. Over residues 417–445 (SGISPRTTTLGPNGNSNTSNEELPTSDVN) the composition is skewed to polar residues. Over residues 446–458 (DINKDMTKKKMKF) the composition is skewed to basic and acidic residues.

It belongs to the MFG1 family. Interacts with FLO8 and MSS11, both morphogenetic transcription factors binding directly to the FLO11 promoter.

The protein localises to the nucleus. Functionally, transcriptional regulator with a general role in all morphogenetically distinct forms of filamentous growth, namely haploid invasive growth, biofilm formation, and diploid pseudohyphal growth. May control FLO11 gene expression as part of a promoter-bound complex with FLO8 and MSS1. The polypeptide is Morphogenetic regulator of filamentous growth protein 1 (MFG1) (Saccharomyces cerevisiae (strain ATCC 204508 / S288c) (Baker's yeast)).